A 1063-amino-acid polypeptide reads, in one-letter code: Kinesin-like protein KIN-7H (1063 aa).

The Kinesin motor domain occupies 18-342; sequence KIYVSVRMRP…LLFASCAKEV (325 aa). Residue 106-113 participates in ATP binding; that stretch reads GQTSSGKT. Positions 351-436 form a coiled coil; that stretch reads VMSDKALVKH…KNQEKETLST (86 aa). The interval 574 to 664 is disordered; sequence SDISIGPVEN…ESNLTKNPAL (91 aa).

The protein belongs to the TRAFAC class myosin-kinesin ATPase superfamily. Kinesin family. KIN-7 subfamily.

This Arabidopsis thaliana (Mouse-ear cress) protein is Kinesin-like protein KIN-7H.